Consider the following 482-residue polypeptide: UDP-N-acetylmuramate--L-alanine ligase (482 aa).

119-125 (GTHGKTT) provides a ligand contact to ATP.

Belongs to the MurCDEF family.

The protein localises to the cytoplasm. The enzyme catalyses UDP-N-acetyl-alpha-D-muramate + L-alanine + ATP = UDP-N-acetyl-alpha-D-muramoyl-L-alanine + ADP + phosphate + H(+). The protein operates within cell wall biogenesis; peptidoglycan biosynthesis. Cell wall formation. This chain is UDP-N-acetylmuramate--L-alanine ligase, found in Cyanothece sp. (strain PCC 7425 / ATCC 29141).